Reading from the N-terminus, the 212-residue chain is Imidazole glycerol phosphate synthase subunit HisH (212 aa).

The 212-residue stretch at 1–212 (MLAILDYKAG…YAYCKEASRA (212 aa)) folds into the Glutamine amidotransferase type-1 domain. Cys79 (nucleophile) is an active-site residue. Active-site residues include His187 and Glu189.

As to quaternary structure, heterodimer of HisH and HisF.

It is found in the cytoplasm. It carries out the reaction 5-[(5-phospho-1-deoxy-D-ribulos-1-ylimino)methylamino]-1-(5-phospho-beta-D-ribosyl)imidazole-4-carboxamide + L-glutamine = D-erythro-1-(imidazol-4-yl)glycerol 3-phosphate + 5-amino-1-(5-phospho-beta-D-ribosyl)imidazole-4-carboxamide + L-glutamate + H(+). The enzyme catalyses L-glutamine + H2O = L-glutamate + NH4(+). The protein operates within amino-acid biosynthesis; L-histidine biosynthesis; L-histidine from 5-phospho-alpha-D-ribose 1-diphosphate: step 5/9. Its function is as follows. IGPS catalyzes the conversion of PRFAR and glutamine to IGP, AICAR and glutamate. The HisH subunit catalyzes the hydrolysis of glutamine to glutamate and ammonia as part of the synthesis of IGP and AICAR. The resulting ammonia molecule is channeled to the active site of HisF. This is Imidazole glycerol phosphate synthase subunit HisH from Nitratidesulfovibrio vulgaris (strain DSM 19637 / Miyazaki F) (Desulfovibrio vulgaris).